The chain runs to 873 residues: V-type proton ATPase 116 kDa subunit a 2 (873 aa).

Residues 1–407 are Cytoplasmic-facing; it reads MGSLSRSEEM…TIITFPFLFS (407 aa). Residues 408–428 traverse the membrane as a helical segment; the sequence is CMFGDLGHGCIMLMAGLWFVL. Residues 429-445 lie on the Lumenal side of the membrane; it reads REKNLQARNIKDEIFNM. A helical membrane pass occupies residues 446–466; the sequence is FFGGRYIILLMGLFSIHAGII. Residues 467–543 are Cytoplasmic-facing; it reads YNDMFAKSFN…NKLNFLNSMK (77 aa). A helical membrane pass occupies residues 544-564; that stretch reads MKLSVILGISQMTFGVILSFF. Residues Asn-565 and Asn-569 are each glycosylated (N-linked (GlcNAc...) asparagine). Residues 565-574 lie on the Lumenal side of the membrane; it reads NHTYNKSKID. A helical membrane pass occupies residues 575 to 595; sequence IFTVFIPQMLFMGCIFMYLCL. Topologically, residues 596-614 are cytoplasmic; that stretch reads QIILKWLFFWTKEATVFGQ. Residues 615–635 traverse the membrane as a helical segment; it reads IYPGSHCAPSLLIGLINMFMM. Over 636–668 the chain is Lumenal; that stretch reads KDRNAGFVVDGGKVNGEYREVETCYLSQWYPGQ. Residues 669–689 form a helical membrane-spanning segment; it reads SVIEMILVVIAVICVPVMLFG. Residues 690-785 lie on the Cytoplasmic side of the membrane; sequence KPIHHVMQQK…LWALSLAHAQ (96 aa). Residues 786–806 form a helical membrane-spanning segment; the sequence is LSEVLWHMVFVTGGLGISGTA. Gly-807 is a topological domain (lumenal). A helical membrane pass occupies residues 808-828; the sequence is FIAVYVVFFIFFVLTISILVL. Residues 829–873 are Cytoplasmic-facing; the sequence is MEGLSAFLHTLRLHWVEFQSKFYLGLGYPFVPYSFKTALQEAEAA.

It belongs to the V-ATPase 116 kDa subunit family. V-ATPase is a heteromultimeric enzyme made up of two complexes: the ATP-hydrolytic V1 complex and the proton translocation V0 complex. The V1 complex consists of three catalytic AB heterodimers that form a heterohexamer, three peripheral stalks each consisting of EG heterodimers, one central rotor including subunits D and F, and the regulatory subunits C and H. The proton translocation complex V0 consists of the proton transport subunit a, a ring of proteolipid subunits c9c'', rotary subunit d, subunits e and f, and the accessory subunits vah-19/Ac45 and vah-20/PRR. Interacts with V-type proton ATPase subunit C vha-11. Expressed in the H-shaped excretory cell (at protein level). Expressed in hypodermal cells around the vulva. Expressed in the main epidermal syncytium. Expressed in the sheath cells associated with head and tail sensory organs; specifically, expressed in the apical sheath cells of the amphids and CEP neuron and in the sheath cells of the OLQ sensory organ.

Its subcellular location is the apical cell membrane. It localises to the endosome. The protein localises to the multivesicular body membrane. Functionally, subunit of the V0 complex of vacuolar(H+)-ATPase (V-ATPase), a multisubunit enzyme composed of a peripheral complex (V1) that hydrolyzes ATP and a membrane integral complex (V0) that translocates protons. V-ATPase is responsible for acidifying and maintaining the pH of intracellular compartments and in some cell types, is targeted to the plasma membrane, where it is responsible for acidifying the extracellular environment. Involved in the assembly of the V-ATPase complex. The V-ATPase is required for the function of the excretory canal. Independently of the V1 complex, the V0 complex of the V-ATPase is required for multivesicular body membrane fusion with the apical membrane of the epidermal cells during exosome release and thus regulates the release of cuticle components such as Hedgehog-related peptide wrt-2 but not collagen. Also, in the epidermis, regulates the trafficking of che-14 and rdy-2. Regulates the secretion of granular material found in the amphid channel and in controlling osmoregulation in the amphid pocket. This Caenorhabditis elegans protein is V-type proton ATPase 116 kDa subunit a 2.